Consider the following 483-residue polypeptide: Serine/threonine-protein phosphatase 2A regulatory subunit phr2AB (483 aa).

WD repeat units lie at residues 22–61 (SDANVVPAIEFDQTGDFIAVGDKGGKVLLLKRTHDKQSSK) and 88–129 (EIEE…IKQV). A disordered region spans residues 132-152 (SATTTGPSYNGSLASNNTRSP). WD repeat units follow at residues 206 to 244 (AHAYHINSISLNSDGETYISSDDLRIHLWNLNINTECFN), 255 to 295 (DLTE…LCDN), 314 to 352 (EIISSISDIKFSRDGRYILSRDFLTLKLWDINMENKPVK), and 369 to 410 (ENDC…DVCL). The segment at 421 to 443 (TKTLTTKMKLRSSKKEPKKPEDI) is disordered. Residues 433–443 (SKKEPKKPEDI) show a composition bias toward basic and acidic residues. The WD 7 repeat unit spans residues 449–483 (EYTKKTLHCAWHPKDNLIAVGAANTVYLYAATENK).

It belongs to the phosphatase 2A regulatory subunit B family. In terms of assembly, PP2A consists of a trimeric holoenzyme, composed of a 37 kDa catalytic subunit (C subunit) and a 65 kDa constant regulatory subunit (A subunit), that associates with a variety of regulatory subunits (B subunit) such as phr2AB (B55) and psrA (B56 homolog). The trimer may partially dissociates into a core 'AC' dimer equally active compared to the trimer.

It is found in the cytoplasm. It localises to the cytosol. Its subcellular location is the cytoskeleton. The protein localises to the microtubule organizing center. The protein resides in the centrosome. Functionally, the B regulatory subunit might modulate substrate selectivity and catalytic activity, and might also direct the localization of the catalytic enzyme to a particular subcellular compartment. This chain is Serine/threonine-protein phosphatase 2A regulatory subunit phr2AB (phr2aB), found in Dictyostelium discoideum (Social amoeba).